A 701-amino-acid polypeptide reads, in one-letter code: Glycine--tRNA ligase beta subunit (701 aa).

Belongs to the class-II aminoacyl-tRNA synthetase family. In terms of assembly, tetramer of two alpha and two beta subunits.

The protein localises to the cytoplasm. It carries out the reaction tRNA(Gly) + glycine + ATP = glycyl-tRNA(Gly) + AMP + diphosphate. The chain is Glycine--tRNA ligase beta subunit from Nitratidesulfovibrio vulgaris (strain DSM 19637 / Miyazaki F) (Desulfovibrio vulgaris).